The chain runs to 66 residues: Large ribosomal subunit protein bL33 (66 aa).

Belongs to the bacterial ribosomal protein bL33 family.

In Wolbachia pipientis subsp. Culex pipiens (strain wPip), this protein is Large ribosomal subunit protein bL33.